We begin with the raw amino-acid sequence, 339 residues long: MKLRILKSAVTNPWFNLATEDWIFNTLNPDSHTLFLWRNSETVVIGRSQNPWVECKIDKMEADDVFLARRQSGGGAVFHDLGNTNFTFLSPKDDYDQAANFTIIINALKKLGIDADLSGRNDMQVGDKKISGSAFKHTADRSFHHGTLLVNANMQKLGDYLNPHPLKLKAKGIKSVRARVANLVEFNEDINHETLSDAIIEAFREYYRDTDYGDTAPVEELDEASLAKQPNLNKYYQQMADWDWRFGKTPEFTHHIETRFNWGIIDLHLDVKQAAIREVVIFSDALNVELIDLLKESLADVKYDKHDIKAKFDELNRAHPELAAQIDDVSEWLIGEMEG.

One can recognise a BPL/LPL catalytic domain in the interval 28–211 (NPDSHTLFLW…AFREYYRDTD (184 aa)). ATP contacts are provided by residues Arg70, 75 to 78 (GAVF), and Lys129. Lys129 provides a ligand contact to (R)-lipoate.

The protein belongs to the LplA family. In terms of assembly, monomer.

It localises to the cytoplasm. It catalyses the reaction L-lysyl-[lipoyl-carrier protein] + (R)-lipoate + ATP = N(6)-[(R)-lipoyl]-L-lysyl-[lipoyl-carrier protein] + AMP + diphosphate + H(+). It participates in protein modification; protein lipoylation via exogenous pathway; protein N(6)-(lipoyl)lysine from lipoate: step 1/2. It functions in the pathway protein modification; protein lipoylation via exogenous pathway; protein N(6)-(lipoyl)lysine from lipoate: step 2/2. Catalyzes both the ATP-dependent activation of exogenously supplied lipoate to lipoyl-AMP and the transfer of the activated lipoyl onto the lipoyl domains of lipoate-dependent enzymes. The sequence is that of Lipoate-protein ligase A from Psychrobacter cryohalolentis (strain ATCC BAA-1226 / DSM 17306 / VKM B-2378 / K5).